The sequence spans 265 residues: MPHLLIIDALNLIRRLHAVQAQQALTPAQALIATRANLINTCRKLLTGSEPTHVIAVFDGEIHSWRKEVYPAYKEGRTPMPVELREGLNTLQDAFWECGVDALLSQTDEADDLIATLASGIAQHGARATIISTDKGFCQLICPQIQIRDYFNKRWLDAAFVEQQYGVVPAQLVDFWALTGISGSNIKGVPGIGPKTATQLLQQYGSLSALLAACQQEEASKPLLKLRQYQDDALLAQRLVRLQRDIPLGFNLREIRYPPAPESEA.

Position 111 (Asp111) interacts with Mg(2+). The region spanning 167–260 (VVPAQLVDFW…NLREIRYPPA (94 aa)) is the 5'-3' exonuclease domain. Residues Leu178, Val189, and Ile192 each coordinate K(+). The interval 191-196 (GIGPKT) is interaction with DNA.

This sequence belongs to the Xni family. It depends on Mg(2+) as a cofactor. The cofactor is K(+).

Its function is as follows. Has flap endonuclease activity. During DNA replication, flap endonucleases cleave the 5'-overhanging flap structure that is generated by displacement synthesis when DNA polymerase encounters the 5'-end of a downstream Okazaki fragment. The polypeptide is Flap endonuclease Xni (Aeromonas salmonicida (strain A449)).